We begin with the raw amino-acid sequence, 443 residues long: Probable glycine dehydrogenase (decarboxylating) subunit 1 (443 aa).

This sequence belongs to the GcvP family. N-terminal subunit subfamily. The glycine cleavage system is composed of four proteins: P, T, L and H. In this organism, the P 'protein' is a heterodimer of two subunits.

It catalyses the reaction N(6)-[(R)-lipoyl]-L-lysyl-[glycine-cleavage complex H protein] + glycine + H(+) = N(6)-[(R)-S(8)-aminomethyldihydrolipoyl]-L-lysyl-[glycine-cleavage complex H protein] + CO2. Its function is as follows. The glycine cleavage system catalyzes the degradation of glycine. The P protein binds the alpha-amino group of glycine through its pyridoxal phosphate cofactor; CO(2) is released and the remaining methylamine moiety is then transferred to the lipoamide cofactor of the H protein. This Desulfovibrio desulfuricans (strain ATCC 27774 / DSM 6949 / MB) protein is Probable glycine dehydrogenase (decarboxylating) subunit 1.